A 194-amino-acid chain; its full sequence is ATP-dependent Clp protease proteolytic subunit (194 aa).

The active-site Nucleophile is serine 98. Residue histidine 123 is part of the active site.

Belongs to the peptidase S14 family. Component of the chloroplastic Clp protease core complex.

It localises to the plastid. It is found in the cyanelle. It catalyses the reaction Hydrolysis of proteins to small peptides in the presence of ATP and magnesium. alpha-casein is the usual test substrate. In the absence of ATP, only oligopeptides shorter than five residues are hydrolyzed (such as succinyl-Leu-Tyr-|-NHMec, and Leu-Tyr-Leu-|-Tyr-Trp, in which cleavage of the -Tyr-|-Leu- and -Tyr-|-Trp bonds also occurs).. Its function is as follows. Cleaves peptides in various proteins in a process that requires ATP hydrolysis. Has a chymotrypsin-like activity. Plays a major role in the degradation of misfolded proteins. This is ATP-dependent Clp protease proteolytic subunit (clpP-A) from Cyanophora paradoxa.